A 421-amino-acid polypeptide reads, in one-letter code: Serine hydroxymethyltransferase (421 aa).

(6S)-5,6,7,8-tetrahydrofolate is bound by residues Leu121 and 125 to 127 (GHL). Residue Lys229 is modified to N6-(pyridoxal phosphate)lysine.

Belongs to the SHMT family. Homodimer. Pyridoxal 5'-phosphate serves as cofactor.

It localises to the cytoplasm. It carries out the reaction (6R)-5,10-methylene-5,6,7,8-tetrahydrofolate + glycine + H2O = (6S)-5,6,7,8-tetrahydrofolate + L-serine. The protein operates within one-carbon metabolism; tetrahydrofolate interconversion. It participates in amino-acid biosynthesis; glycine biosynthesis; glycine from L-serine: step 1/1. Catalyzes the reversible interconversion of serine and glycine with tetrahydrofolate (THF) serving as the one-carbon carrier. This reaction serves as the major source of one-carbon groups required for the biosynthesis of purines, thymidylate, methionine, and other important biomolecules. Also exhibits THF-independent aldolase activity toward beta-hydroxyamino acids, producing glycine and aldehydes, via a retro-aldol mechanism. The sequence is that of Serine hydroxymethyltransferase from Haemophilus influenzae (strain PittGG).